Here is a 404-residue protein sequence, read N- to C-terminus: Probable tRNA sulfurtransferase (404 aa).

The THUMP domain maps to 60–165 (QPVVEALKLV…DEAAYISYEE (106 aa)). Residues 183–184 (ML), 208–209 (HF), arginine 265, glycine 287, and glutamine 296 each bind ATP.

This sequence belongs to the ThiI family.

Its subcellular location is the cytoplasm. It catalyses the reaction [ThiI sulfur-carrier protein]-S-sulfanyl-L-cysteine + a uridine in tRNA + 2 reduced [2Fe-2S]-[ferredoxin] + ATP + H(+) = [ThiI sulfur-carrier protein]-L-cysteine + a 4-thiouridine in tRNA + 2 oxidized [2Fe-2S]-[ferredoxin] + AMP + diphosphate. It carries out the reaction [ThiS sulfur-carrier protein]-C-terminal Gly-Gly-AMP + S-sulfanyl-L-cysteinyl-[cysteine desulfurase] + AH2 = [ThiS sulfur-carrier protein]-C-terminal-Gly-aminoethanethioate + L-cysteinyl-[cysteine desulfurase] + A + AMP + 2 H(+). The protein operates within cofactor biosynthesis; thiamine diphosphate biosynthesis. Its function is as follows. Catalyzes the ATP-dependent transfer of a sulfur to tRNA to produce 4-thiouridine in position 8 of tRNAs, which functions as a near-UV photosensor. Also catalyzes the transfer of sulfur to the sulfur carrier protein ThiS, forming ThiS-thiocarboxylate. This is a step in the synthesis of thiazole, in the thiamine biosynthesis pathway. The sulfur is donated as persulfide by IscS. In Streptococcus pyogenes serotype M6 (strain ATCC BAA-946 / MGAS10394), this protein is Probable tRNA sulfurtransferase.